Here is a 349-residue protein sequence, read N- to C-terminus: Ion-translocating oxidoreductase complex subunit D (349 aa).

3 helical membrane passes run 37–57 (AFFG…ALSA), 73–90 (LSDN…VAIP), and 124–144 (AMAA…TWIA). The residue at position 185 (Thr185) is an FMN phosphoryl threonine. Transmembrane regions (helical) follow at residues 212–232 (ATGV…LVLL), 239–259 (WHIS…GFLL), 265–285 (GSPL…FIAT), 291–311 (ATSP…VYII), and 315–335 (GGYP…APFI).

Belongs to the NqrB/RnfD family. In terms of assembly, the complex is composed of six subunits: RnfA, RnfB, RnfC, RnfD, RnfE and RnfG. It depends on FMN as a cofactor.

It localises to the cell inner membrane. In terms of biological role, part of a membrane-bound complex that couples electron transfer with translocation of ions across the membrane. The protein is Ion-translocating oxidoreductase complex subunit D of Shewanella sp. (strain W3-18-1).